Consider the following 225-residue polypeptide: UPF0758 protein BCG9842_B0662 (225 aa).

Positions 103–225 (SIRSPEDCAK…FVSLKEKGHI (123 aa)) constitute an MPN domain. Residues His174, His176, and Asp187 each contribute to the Zn(2+) site. The JAMM motif signature appears at 174–187 (HNHPSGDPTPSRED).

This sequence belongs to the UPF0758 family.

The sequence is that of UPF0758 protein BCG9842_B0662 from Bacillus cereus (strain G9842).